The sequence spans 361 residues: Histidinol-phosphate aminotransferase (361 aa).

Residue lysine 224 is modified to N6-(pyridoxal phosphate)lysine.

Belongs to the class-II pyridoxal-phosphate-dependent aminotransferase family. Histidinol-phosphate aminotransferase subfamily. As to quaternary structure, homodimer. The cofactor is pyridoxal 5'-phosphate.

The catalysed reaction is L-histidinol phosphate + 2-oxoglutarate = 3-(imidazol-4-yl)-2-oxopropyl phosphate + L-glutamate. It functions in the pathway amino-acid biosynthesis; L-histidine biosynthesis; L-histidine from 5-phospho-alpha-D-ribose 1-diphosphate: step 7/9. This is Histidinol-phosphate aminotransferase from Bacillus licheniformis (strain ATCC 14580 / DSM 13 / JCM 2505 / CCUG 7422 / NBRC 12200 / NCIMB 9375 / NCTC 10341 / NRRL NRS-1264 / Gibson 46).